A 1223-amino-acid polypeptide reads, in one-letter code: DNA-directed RNA polymerase subunit beta' (1223 aa).

Zn(2+) contacts are provided by C60, C62, C75, and C78. Mg(2+) contacts are provided by D449, D451, and D453. C818, C892, C899, and C902 together coordinate Zn(2+).

The protein belongs to the RNA polymerase beta' chain family. The RNAP catalytic core consists of 2 alpha, 1 beta, 1 beta' and 1 omega subunit. When a sigma factor is associated with the core the holoenzyme is formed, which can initiate transcription. The cofactor is Mg(2+). Zn(2+) serves as cofactor.

The catalysed reaction is RNA(n) + a ribonucleoside 5'-triphosphate = RNA(n+1) + diphosphate. Functionally, DNA-dependent RNA polymerase catalyzes the transcription of DNA into RNA using the four ribonucleoside triphosphates as substrates. The sequence is that of DNA-directed RNA polymerase subunit beta' from Lactobacillus gasseri (strain ATCC 33323 / DSM 20243 / BCRC 14619 / CIP 102991 / JCM 1131 / KCTC 3163 / NCIMB 11718 / NCTC 13722 / AM63).